Consider the following 157-residue polypeptide: DNA gyrase inhibitor (157 aa).

It belongs to the DNA gyrase inhibitor family. Interacts with DNA gyrase.

Its subcellular location is the cytoplasm. Its function is as follows. Inhibits the supercoiling activity of DNA gyrase. Acts by inhibiting DNA gyrase at an early step, prior to (or at the step of) binding of DNA by the gyrase. It protects cells against toxins that target DNA gyrase, by inhibiting activity of these toxins and reducing the formation of lethal double-strand breaks in the cell. The sequence is that of DNA gyrase inhibitor from Cronobacter turicensis (strain DSM 18703 / CCUG 55852 / LMG 23827 / z3032).